The primary structure comprises 104 residues: UPF0213 protein VIBHAR_05350 (104 aa).

A GIY-YIG domain is found at 7-82 (QRWSVYLIRN…KQLTKTKKEL (76 aa)).

Belongs to the UPF0213 family.

This chain is UPF0213 protein VIBHAR_05350, found in Vibrio campbellii (strain ATCC BAA-1116).